A 347-amino-acid chain; its full sequence is sn-1 oleoyl-lipid 12-desaturase (347 aa).

The next 2 helical transmembrane spans lie at 41–63 (AWSR…AIAP) and 67–85 (LLPV…FVIG). Positions 86-90 (HDCGH) match the Histidine box-1 motif. A helical membrane pass occupies residues 98–118 (WVNNLVGHLAFLPLIYPFHSW). Residues 122–126 (HNHHH) carry the Histidine box-2 motif. The next 3 helical transmembrane spans lie at 164–184 (LWWL…FAFE), 196–216 (LFVI…LGVW), and 218–238 (VVKF…TFTL). A Histidine box-3 motif is present at residues 286 to 290 (HHLST).

The protein belongs to the fatty acid desaturase type 2 family. The cofactor is Fe(2+).

It localises to the membrane. It catalyses the reaction a 1-[(9Z)-octadecenoyl]-2-acyl-glycerolipid + 2 reduced [2Fe-2S]-[ferredoxin] + O2 + 2 H(+) = a 1-[(9Z,12Z)-octadecdienoyl]-2-acyl-glycerolipid + 2 oxidized [2Fe-2S]-[ferredoxin] + 2 H2O. It participates in lipid metabolism; polyunsaturated fatty acid biosynthesis. In terms of biological role, desaturase involved in fatty acid biosynthesis. Introduces a double bond at carbon 12 of oleoyl groups (18:1) attached to the sn-1 position of the glycerol moiety of membrane glycerolipids. Can also efficiently catalyze the desaturation of palmitoleic acid (16:1) in vitro. This Picosynechococcus sp. (strain ATCC 27264 / PCC 7002 / PR-6) (Agmenellum quadruplicatum) protein is sn-1 oleoyl-lipid 12-desaturase.